Consider the following 1307-residue polypeptide: MSVTPVILEAYCAVSDEVAKQVKKYLLGDFAEESKFERKNSESSDGSETQFCRATEKKENVEVWDDWGDKEEGAAENSLESDESIRNWLFRCDLKTYSDAEYLLVTWESRFVVLRKPPDEPVYKIVCKQYIEGDPISNEITASSIFGLSNVRHIELLDSIIIALGTLDGHVYFFTEQGTMLYFDRFSIFEPVNSLQFEVVKTGQTFIVVFTKGFFMINPISLKSVLYQAKVLIAKCEKTVKQISESIELQSELLAPDIKGNIIHVIFTGLHKPSTLEQYISASYDSFYAKVEKPSLPLYSTFMVTTEKEFAVFVWHDREEQDKLIDDVIKYGKSLVPSFGIRKFFGISTEPARIASHMRSAVHAPTRSIIMETRVAQNVSRSPDCQYVAVTDRMARVLVIDIASRQVVLIFKGYRDASISWVSVTEDDRVAQFLTIFAPRRSLLEVWTVLGNVRVCAQHVPSSECNVVTGGENKMLCGRCHVHTDSNSFFIDEKGEFHRIALPFHLALTSRSRQDQHDHLLLKQLENTKTGGEDWFQTFSDLKMATSRKTTFQNALHNLSTAEEAHQFIARIRSIPTSASLGDLPNSAEKSIGFYARTVAETKPPVGEYDDKDTSNYKLDSIVERILECHMQKFGERTDMLNDSEVMKVGEWLKYVDLSQEDIDVFSEHWSEKQRHCLANLIFGPLFGSFEIDEYYDTVLEKIPVKRKNIVKLFYMRFEKTTTHIDWRIFNRIVEMFLNLEKSETGILEQVDQMAMDSKDVPLGMILLSICWCARIQIRILKGNDEDEVENDHDLEEEDEKNKTIDEWDAISPEAEHLDCIIMCLHCVSLAQSLLKDDSNILRISDVVPRIDSYIRENVAKWIVSTPIDTDTIEKLFPRDPSENLAEKGNEEDRRKQMIIDFPDDKEVVIQRMYQIIPRVFEHDLVVADVCWEMMSQWFREKDDNFSYIKDCTTLLPQSIVDPRLRHGIARLIWDKFIFMVFQSIVNMVEKTGRRPKDKETRKEIGFGEVKLEEFLMECEKFLEVLMDSVRDMPPPIDFKQDLLVEMASSSFAAHLHQSKTAYRQDQFAILASRQPLVNFHLVLHHQHLALALRLQLTTGLRFHPLRNLFCVTGNRAFFASLDSHPLIPLDRVDDATMEKRHAFLVKVAEQGSMEERRLARHLEMEWKLTVNEISFMQALSSFRLGNDHQGSLELASCVRDDRSAVALARVLAARLIQLANEANKRYSTAHSQYLCALAGEEAARVELYENSPDDPLVDSNPKTWKDAVTSLGRAGNSVPQSAQAAIPFVRMNDIAKLYFGAQWVNN.

The protein belongs to the Rab3-GAP regulatory subunit family. The Rab3 GTPase-activating complex is a heterodimer composed of rbg-1 and rbg-2.

It is found in the cytoplasm. Its function is as follows. Probable regulatory subunit of a GTPase activating protein that has specificity for Rab3 subfamily. Rab3 proteins are involved in regulated exocytosis of neurotransmitters and hormones. Rab3 GTPase-activating complex specifically converts active Rab3-GTP to the inactive form Rab3-GDP. The protein is Rab3 GTPase-activating protein regulatory subunit (rbg-2) of Caenorhabditis elegans.